The sequence spans 192 residues: Phosphoheptose isomerase (192 aa).

The SIS domain occupies 37-192 (LADSFKAGGK…IQLIEKEMVK (156 aa)). 52–54 (NGG) contacts substrate. His61 and Glu65 together coordinate Zn(2+). Substrate is bound by residues Glu65, 93-94 (ND), 119-121 (STS), Ser124, and Gln172. Zn(2+)-binding residues include Gln172 and His180.

It belongs to the SIS family. GmhA subfamily. In terms of assembly, homotetramer. It depends on Zn(2+) as a cofactor.

The protein localises to the cytoplasm. It carries out the reaction 2 D-sedoheptulose 7-phosphate = D-glycero-alpha-D-manno-heptose 7-phosphate + D-glycero-beta-D-manno-heptose 7-phosphate. Its pathway is carbohydrate biosynthesis; D-glycero-D-manno-heptose 7-phosphate biosynthesis; D-glycero-alpha-D-manno-heptose 7-phosphate and D-glycero-beta-D-manno-heptose 7-phosphate from sedoheptulose 7-phosphate: step 1/1. Catalyzes the isomerization of sedoheptulose 7-phosphate in D-glycero-D-manno-heptose 7-phosphate. The polypeptide is Phosphoheptose isomerase (Shigella dysenteriae serotype 1 (strain Sd197)).